The following is a 438-amino-acid chain: UDP-N-acetylglucosamine 1-carboxyvinyltransferase 1 (438 aa).

22-23 (KN) is a binding site for phosphoenolpyruvate. Arg-95 contributes to the UDP-N-acetyl-alpha-D-glucosamine binding site. Catalysis depends on Cys-119, which acts as the Proton donor. Position 119 is a 2-(S-cysteinyl)pyruvic acid O-phosphothioketal (Cys-119). UDP-N-acetyl-alpha-D-glucosamine-binding positions include 124–128 (RPIDL), Asp-307, and Val-329.

The protein belongs to the EPSP synthase family. MurA subfamily.

Its subcellular location is the cytoplasm. It carries out the reaction phosphoenolpyruvate + UDP-N-acetyl-alpha-D-glucosamine = UDP-N-acetyl-3-O-(1-carboxyvinyl)-alpha-D-glucosamine + phosphate. The protein operates within cell wall biogenesis; peptidoglycan biosynthesis. Functionally, cell wall formation. Adds enolpyruvyl to UDP-N-acetylglucosamine. In Lactiplantibacillus plantarum (strain ATCC BAA-793 / NCIMB 8826 / WCFS1) (Lactobacillus plantarum), this protein is UDP-N-acetylglucosamine 1-carboxyvinyltransferase 1.